We begin with the raw amino-acid sequence, 308 residues long: ATP synthase gamma chain (308 aa).

The protein belongs to the ATPase gamma chain family. As to quaternary structure, F-type ATPases have 2 components, CF(1) - the catalytic core - and CF(0) - the membrane proton channel. CF(1) has five subunits: alpha(3), beta(3), gamma(1), delta(1), epsilon(1). CF(0) has three main subunits: a, b and c.

It is found in the cell inner membrane. Functionally, produces ATP from ADP in the presence of a proton gradient across the membrane. The gamma chain is believed to be important in regulating ATPase activity and the flow of protons through the CF(0) complex. The chain is ATP synthase gamma chain from Bartonella tribocorum (strain CIP 105476 / IBS 506).